A 353-amino-acid polypeptide reads, in one-letter code: DNA integrity scanning protein DisA (353 aa).

The DAC domain occupies 6-144; that stretch reads DKELMNILKI…GGIKYVLRDS (139 aa). Residues G73, L91, and 104 to 108 each bind ATP; that span reads TRHRT.

The protein belongs to the DisA family. In terms of assembly, homooctamer. Mg(2+) serves as cofactor.

It carries out the reaction 2 ATP = 3',3'-c-di-AMP + 2 diphosphate. In terms of biological role, participates in a DNA-damage check-point that is active prior to asymmetric division when DNA is damaged. DisA forms globular foci that rapidly scan along the chromosomes during sporulation, searching for lesions. When a lesion is present, DisA pauses at the lesion site. This triggers a cellular response that culminates in a temporary block in sporulation initiation. Functionally, also has diadenylate cyclase activity, catalyzing the condensation of 2 ATP molecules into cyclic di-AMP (c-di-AMP). c-di-AMP acts as a signaling molecule that couples DNA integrity with progression of sporulation. The rise in c-di-AMP level generated by DisA while scanning the chromosome, operates as a positive signal that advances sporulation; upon encountering a lesion, the DisA focus arrests at the damaged site and halts c-di-AMP synthesis. The protein is DNA integrity scanning protein DisA of Clostridium botulinum (strain Loch Maree / Type A3).